A 422-amino-acid polypeptide reads, in one-letter code: 2-(3-amino-3-carboxypropyl)histidine synthase subunit 1 (422 aa).

[4Fe-4S] cluster is bound by residues C128, C234, and C363.

It belongs to the DPH1/DPH2 family. DPH1 subfamily. In terms of assembly, component of the 2-(3-amino-3-carboxypropyl)histidine synthase complex composed of DPH1, DPH2, DPH3 and a NADH-dependent reductase, predominantly CBR1. [4Fe-4S] cluster serves as cofactor.

The protein resides in the cytoplasm. It catalyses the reaction L-histidyl-[translation elongation factor 2] + S-adenosyl-L-methionine = 2-[(3S)-amino-3-carboxypropyl]-L-histidyl-[translation elongation factor 2] + S-methyl-5'-thioadenosine + H(+). It functions in the pathway protein modification; peptidyl-diphthamide biosynthesis. Functionally, catalyzes the first step of diphthamide biosynthesis, a post-translational modification of histidine which occurs in elongation factor 2. DPH1 and DPH2 transfer a 3-amino-3-carboxypropyl (ACP) group from S-adenosyl-L-methionine (SAM) to a histidine residue, the reaction is assisted by a reduction system comprising DPH3 and a NADH-dependent reductase, predominantly CBR1. The polypeptide is 2-(3-amino-3-carboxypropyl)histidine synthase subunit 1 (DPH1) (Kluyveromyces lactis (strain ATCC 8585 / CBS 2359 / DSM 70799 / NBRC 1267 / NRRL Y-1140 / WM37) (Yeast)).